Consider the following 263-residue polypeptide: Glutamate racemase (263 aa).

Substrate is bound by residues 10-11 and 42-43; these read DS and YG. The active-site Proton donor/acceptor is the Cys73. A substrate-binding site is contributed by 74-75; that stretch reads NS. Cys183 (proton donor/acceptor) is an active-site residue. Substrate is bound at residue 184-185; the sequence is TH.

The protein belongs to the aspartate/glutamate racemases family.

The enzyme catalyses L-glutamate = D-glutamate. The protein operates within cell wall biogenesis; peptidoglycan biosynthesis. Functionally, provides the (R)-glutamate required for cell wall biosynthesis. This Acidothermus cellulolyticus (strain ATCC 43068 / DSM 8971 / 11B) protein is Glutamate racemase.